The sequence spans 340 residues: Alpha-1,3-galactosyltransferase 2 (340 aa).

Residues 1-12 (MALKEGLRAWKR) lie on the Cytoplasmic side of the membrane. The chain crosses the membrane as a helical; Signal-anchor for type II membrane protein span at residues 13-32 (IFWRQILLTLGLLGLFLYGL). Topologically, residues 33–340 (PKFRHLEALI…APKGYRLLRN (308 aa)) are lumenal. 2 N-linked (GlcNAc...) asparagine glycosylation sites follow: N58 and N100. The Mn(2+) site is built by D199 and D201.

The protein belongs to the glycosyltransferase 6 family. Mn(2+) serves as cofactor. As to expression, expressed in thymus and monocyte derived dendritic cells.

It is found in the golgi apparatus. Its subcellular location is the golgi stack membrane. It carries out the reaction a beta-D-galactosyl-(1-&gt;4)-N-acetyl-beta-D-glucosaminyl derivative + UDP-alpha-D-galactose = an alpha-D-galactosyl-(1-&gt;3)-beta-D-galactosyl-(1-&gt;4)-N-acetyl-beta-D-glucosaminyl derivative + UDP + H(+). The enzyme catalyses a beta-D-Gal-(1-&gt;4)-beta-D-Glc-(1&lt;-&gt;1)-Cer(d18:1(4E)) + UDP-alpha-D-galactose = an isogloboside iGb3Cer (d18:1(4E)) + UDP + H(+). It catalyses the reaction a globoside Gb3Cer + UDP-alpha-D-galactose = a globoside GalGb3Cer + UDP + H(+). Its function is as follows. Synthesizes the galactose-alpha(1,3)-galactose group on the glycosphingolipid isoglobotrihexosylceramide or isogloboside 3 (iGb3) by catalyzing the transfer of galactose from UDP-Galactose to its acceptor molecule Gal-beta-1,4-Glc-ceramide. Can also catalyze the addition of galactose to iGb3 itself to form polygalactose structures. This Homo sapiens (Human) protein is Alpha-1,3-galactosyltransferase 2.